Consider the following 707-residue polypeptide: Polyribonucleotide nucleotidyltransferase (707 aa).

Residues Asp-487 and Asp-493 each contribute to the Mg(2+) site. A KH domain is found at 554–613; sequence PSMATIKIDPDKIRDVIGKGGATIRKICDDTGASIDLDDDGTVRIYAEDKTAAKAAIDTV. Residues 623 to 691 form the S1 motif domain; sequence GKLYRGTVAR…NRNRVKLSIK (69 aa).

It belongs to the polyribonucleotide nucleotidyltransferase family. In terms of assembly, component of the RNA degradosome, which is a multiprotein complex involved in RNA processing and mRNA degradation. The cofactor is Mg(2+).

The protein localises to the cytoplasm. It catalyses the reaction RNA(n+1) + phosphate = RNA(n) + a ribonucleoside 5'-diphosphate. Involved in mRNA degradation. Catalyzes the phosphorolysis of single-stranded polyribonucleotides processively in the 3'- to 5'-direction. The polypeptide is Polyribonucleotide nucleotidyltransferase (Chromohalobacter salexigens (strain ATCC BAA-138 / DSM 3043 / CIP 106854 / NCIMB 13768 / 1H11)).